Here is a 688-residue protein sequence, read N- to C-terminus: Glycine--tRNA ligase beta subunit (688 aa).

This sequence belongs to the class-II aminoacyl-tRNA synthetase family. Tetramer of two alpha and two beta subunits.

The protein localises to the cytoplasm. It carries out the reaction tRNA(Gly) + glycine + ATP = glycyl-tRNA(Gly) + AMP + diphosphate. This is Glycine--tRNA ligase beta subunit from Clostridioides difficile (strain 630) (Peptoclostridium difficile).